Here is a 225-residue protein sequence, read N- to C-terminus: UPF0173 metal-dependent hydrolase Pcal_1074 (225 aa).

It belongs to the UPF0173 family.

The polypeptide is UPF0173 metal-dependent hydrolase Pcal_1074 (Pyrobaculum calidifontis (strain DSM 21063 / JCM 11548 / VA1)).